We begin with the raw amino-acid sequence, 580 residues long: N(6)-adenosine-methyltransferase catalytic subunit METTL3 (580 aa).

The interval 1 to 70 is disordered; it reads MSDTWSSIQA…PKPSTASAVP (70 aa). The residue at position 2 (serine 2) is an N-acetylserine; alternate. Position 2 is a phosphoserine; alternate (serine 2). Positions 28–37 are enriched in basic and acidic residues; that stretch reads QDSGHLDLRN. Phosphoserine is present on residues serine 43, serine 48, and serine 50. Glycyl lysine isopeptide (Lys-Gly) (interchain with G-Cter in SUMO1) cross-links involve residues lysine 177, lysine 211, lysine 212, and lysine 215. The segment at 198–219 is disordered; the sequence is LNSSASEPAKEPAKKSRKHAAS. The Nuclear localization signal motif lies at 210–215; that stretch reads AKKSRK. Phosphoserine is present on residues serine 219 and serine 243. A Phosphothreonine modification is found at threonine 348. Serine 350 bears the Phosphoserine mark. Residues 377–378 and aspartate 395 each bind S-adenosyl-L-methionine; that span reads DI. A gate loop 1 region spans residues 396 to 410; the sequence is PPWDIHMELPYGTLT. Interaction with METTL14 regions lie at residues 450-454 and 464-480; these read ERVDE and QRII…NHGK. The interphase loop stretch occupies residues 462 to 479; it reads QLQRIIRTGRTGHWLNHG. The interval 465–478 is positively charged region required for RNA-binding; that stretch reads RIIRTGRTGHWLNH. The segment at 507–515 is gate loop 2; that stretch reads VRSTSHKPD. Residues lysine 513, 536–539, and 549–550 each bind S-adenosyl-L-methionine; these read RPHN and NQ.

The protein belongs to the MT-A70-like family. As to quaternary structure, heterodimer; heterodimerizes with METTL14 to form an antiparallel heterodimer that constitutes an active methyltransferase. Component of the WMM complex, a N6-methyltransferase complex composed of a catalytic subcomplex, named MAC, and of an associated subcomplex, named MACOM. The MAC subcomplex is composed of METTL3 and METTL14. The MACOM subcomplex is composed of WTAP, ZC3H13, CBLL1/HAKAI, VIRMA, and, in some cases of RBM15 (RBM15 or RBM15B). Interacts with NCBP1/CBP80. Interacts with EIF4E. Interacts with EIF3B. Sumoylation inhibits the N6-adenosine-methyltransferase activity. Sumoylation does not affect subcellular location or interaction with METTL14. Desumoylated by SENP1. Widely expressed at low level. Expressed in spleen, thymus, prostate, testis, ovary, small intestine, colon and peripheral blood leukocytes.

The protein localises to the nucleus. Its subcellular location is the nucleus speckle. It is found in the cytoplasm. It carries out the reaction an adenosine in mRNA + S-adenosyl-L-methionine = an N(6)-methyladenosine in mRNA + S-adenosyl-L-homocysteine + H(+). Methyltransferase activity is regulated by miRNAs via a sequence pairing mechanism. Methyltransferase activity is inhibited by sumoylation. Functionally, the METTL3-METTL14 heterodimer forms a N6-methyltransferase complex that methylates adenosine residues at the N(6) position of some RNAs and regulates various processes such as the circadian clock, differentiation of embryonic and hematopoietic stem cells, cortical neurogenesis, response to DNA damage, differentiation of T-cells and primary miRNA processing. In the heterodimer formed with METTL14, METTL3 constitutes the catalytic core. N6-methyladenosine (m6A), which takes place at the 5'-[AG]GAC-3' consensus sites of some mRNAs, plays a role in mRNA stability, processing, translation efficiency and editing. M6A acts as a key regulator of mRNA stability: methylation is completed upon the release of mRNA into the nucleoplasm and promotes mRNA destabilization and degradation. In embryonic stem cells (ESCs), m6A methylation of mRNAs encoding key naive pluripotency-promoting transcripts results in transcript destabilization, promoting differentiation of ESCs. M6A regulates the length of the circadian clock: acts as an early pace-setter in the circadian loop by putting mRNA production on a fast-track for facilitating nuclear processing, thereby providing an early point of control in setting the dynamics of the feedback loop. M6A also regulates circadian regulation of hepatic lipid metabolism. M6A regulates spermatogonial differentiation and meiosis and is essential for male fertility and spermatogenesis. Also required for oogenesis. Involved in the response to DNA damage: in response to ultraviolet irradiation, METTL3 rapidly catalyzes the formation of m6A on poly(A) transcripts at DNA damage sites, leading to the recruitment of POLK to DNA damage sites. M6A is also required for T-cell homeostasis and differentiation: m6A methylation of transcripts of SOCS family members (SOCS1, SOCS3 and CISH) in naive T-cells promotes mRNA destabilization and degradation, promoting T-cell differentiation. Inhibits the type I interferon response by mediating m6A methylation of IFNB. M6A also takes place in other RNA molecules, such as primary miRNA (pri-miRNAs). Mediates m6A methylation of Xist RNA, thereby participating in random X inactivation: m6A methylation of Xist leads to target YTHDC1 reader on Xist and promote transcription repression activity of Xist. M6A also regulates cortical neurogenesis: m6A methylation of transcripts related to transcription factors, neural stem cells, the cell cycle and neuronal differentiation during brain development promotes their destabilization and decay, promoting differentiation of radial glial cells. METTL3 mediates methylation of pri-miRNAs, marking them for recognition and processing by DGCR8. Acts as a positive regulator of mRNA translation independently of the methyltransferase activity: promotes translation by interacting with the translation initiation machinery in the cytoplasm. Its overexpression in a number of cancer cells suggests that it may participate in cancer cell proliferation by promoting mRNA translation. During human coronavirus SARS-CoV-2 infection, adds m6A modifications in SARS-CoV-2 RNA leading to decreased RIGI binding and subsequently dampening the sensing and activation of innate immune responses. In Homo sapiens (Human), this protein is N(6)-adenosine-methyltransferase catalytic subunit METTL3.